A 134-amino-acid chain; its full sequence is Complexin-2 (134 aa).

The interval 1-114 (MDFVMKQALG…CGDEDEEDEE (114 aa)) is disordered. Basic and acidic residues predominate over residues 15-85 (DMGKMLGGDE…EEKEAEEKAA (71 aa)). Residues 29-84 (DAQKKEEERQEALRQQEDERKQKHIRMETEREKVRQQIRDKYGLKKKEEKEAEEKA) adopt a coiled-coil conformation.

Belongs to the complexin/synaphin family. In terms of assembly, binds to the SNARE core complex containing SNAP25, VAMP2 and STX1A. In terms of tissue distribution, nervous system. Present in electric organ (at protein level).

It localises to the cytoplasm. The protein localises to the cytosol. Its subcellular location is the presynapse. The protein resides in the nucleus. It is found in the perikaryon. Positively regulates a late step in synaptic vesicle exocytosis. In Narke japonica (Japanese sleeper ray), this protein is Complexin-2.